Reading from the N-terminus, the 578-residue chain is Polypeptide N-acetylgalactosaminyltransferase 4 (578 aa).

Residues 1–12 (MAVRWTWAGKSC) lie on the Cytoplasmic side of the membrane. The chain crosses the membrane as a helical; Signal-anchor for type II membrane protein span at residues 13 to 35 (LLLALLTLAYILVEFSVSTLYAS). Residues 36–578 (PGAGGARELG…DKNQLWRFEK (543 aa)) lie on the Lumenal side of the membrane. 5 cysteine pairs are disulfide-bonded: Cys-124–Cys-357, Cys-348–Cys-421, Cys-457–Cys-477, Cys-503–Cys-518, and Cys-547–Cys-565. The tract at residues 134–243 (LPTTSVIIAF…TGWLEPLLER (110 aa)) is catalytic subdomain A. 2 residues coordinate substrate: Asp-175 and Arg-204. 2 residues coordinate Mn(2+): Asp-227 and His-229. The catalytic subdomain B stretch occupies residues 303 to 365 (PIRSPTMAGG…PCSHVGHVFP (63 aa)). Trp-334 is a binding site for substrate. His-362 contributes to the Mn(2+) binding site. Tyr-370 serves as a coordination point for substrate. A Ricin B-type lectin domain is found at 444–577 (WHGAIRSMGI…LDKNQLWRFE (134 aa)). An N-linked (GlcNAc...) asparagine glycan is attached at Asn-471.

It belongs to the glycosyltransferase 2 family. GalNAc-T subfamily. Mn(2+) is required as a cofactor. In terms of tissue distribution, highly expressed in sublingual gland, stomach, colon, small intestine and cervix. Expressed at intermediate levels in kidney, ovary, lung and uterus. Weakly expressed in spleen, liver, heart and brain. Not expressed in submandibular and parotid glands, skeletal muscle and testis.

It localises to the golgi apparatus membrane. It catalyses the reaction L-seryl-[protein] + UDP-N-acetyl-alpha-D-galactosamine = a 3-O-[N-acetyl-alpha-D-galactosaminyl]-L-seryl-[protein] + UDP + H(+). It carries out the reaction L-threonyl-[protein] + UDP-N-acetyl-alpha-D-galactosamine = a 3-O-[N-acetyl-alpha-D-galactosaminyl]-L-threonyl-[protein] + UDP + H(+). It functions in the pathway protein modification; protein glycosylation. Its function is as follows. Catalyzes the initial reaction in O-linked oligosaccharide biosynthesis, the transfer of an N-acetyl-D-galactosamine residue to a serine or threonine residue on the protein receptor. Has a highest activity toward EA2 peptide substrate and a much lower activity with EPO-T, Muc2, Muc1a, Muc1b. The polypeptide is Polypeptide N-acetylgalactosaminyltransferase 4 (Galnt4) (Mus musculus (Mouse)).